Reading from the N-terminus, the 186-residue chain is Small ribosomal subunit protein uS5 (186 aa).

Positions 20-83 (FVDKLVHINR…EAAKRDMIFV (64 aa)) constitute an S5 DRBM domain.

It belongs to the universal ribosomal protein uS5 family. In terms of assembly, part of the 30S ribosomal subunit. Contacts proteins S4 and S8.

Functionally, with S4 and S12 plays an important role in translational accuracy. Its function is as follows. Located at the back of the 30S subunit body where it stabilizes the conformation of the head with respect to the body. This chain is Small ribosomal subunit protein uS5, found in Brucella abortus (strain S19).